The chain runs to 398 residues: tRNA(Ile)-lysidine synthase (398 aa).

Serine 25–serine 30 provides a ligand contact to ATP.

It belongs to the tRNA(Ile)-lysidine synthase family.

The protein localises to the cytoplasm. It carries out the reaction cytidine(34) in tRNA(Ile2) + L-lysine + ATP = lysidine(34) in tRNA(Ile2) + AMP + diphosphate + H(+). In terms of biological role, ligates lysine onto the cytidine present at position 34 of the AUA codon-specific tRNA(Ile) that contains the anticodon CAU, in an ATP-dependent manner. Cytidine is converted to lysidine, thus changing the amino acid specificity of the tRNA from methionine to isoleucine. This chain is tRNA(Ile)-lysidine synthase, found in Francisella tularensis subsp. holarctica (strain OSU18).